The following is a 366-amino-acid chain: 3-dehydroquinate synthase (366 aa).

NAD(+) is bound by residues 107–111 (GVIGD), 131–132 (TS), Lys144, and Lys153. Positions 186, 251, and 268 each coordinate Zn(2+).

The protein belongs to the sugar phosphate cyclases superfamily. Dehydroquinate synthase family. Co(2+) is required as a cofactor. Zn(2+) serves as cofactor. Requires NAD(+) as cofactor.

The protein resides in the cytoplasm. The catalysed reaction is 7-phospho-2-dehydro-3-deoxy-D-arabino-heptonate = 3-dehydroquinate + phosphate. The protein operates within metabolic intermediate biosynthesis; chorismate biosynthesis; chorismate from D-erythrose 4-phosphate and phosphoenolpyruvate: step 2/7. Catalyzes the conversion of 3-deoxy-D-arabino-heptulosonate 7-phosphate (DAHP) to dehydroquinate (DHQ). The protein is 3-dehydroquinate synthase of Rippkaea orientalis (strain PCC 8801 / RF-1) (Cyanothece sp. (strain PCC 8801)).